The primary structure comprises 305 residues: MTAVLPLPQPLADPAPRDPRQRLQREQLRLGKRLQRQVGQAIADFGMIAPGDKVMVCLSGGKDSYTLLDMLLQLQRKAPVPFSLVAVNLDQKQPDFPAHVLPAYLRGLGVPFDIVEQDTYSVVSRVIPAGKTMCSLCSRLRRGALYAYAQTHGVTKIALGHHRDDIVATFFMNLFHHARLAAMAPKLRSDDGAHVVIRPLAYVREADIAAYAQARQFPIIPCNLCGSQENLQRQQVGKLLQQWDREFPGRVEQIARALGDVRPEQLADRTLFDFLALGRSGDAPSDVDPDPSAWLSASHAPHDSD.

The segment at 1 to 20 (MTAVLPLPQPLADPAPRDPR) is disordered. A PP-loop motif motif is present at residues 59-64 (SGGKDS). Residues Cys-134, Cys-137, and Cys-225 each coordinate [4Fe-4S] cluster. The segment covering 282–293 (DAPSDVDPDPSA) has biased composition (low complexity). Residues 282–305 (DAPSDVDPDPSAWLSASHAPHDSD) are disordered.

It belongs to the TtcA family. As to quaternary structure, homodimer. Requires Mg(2+) as cofactor. The cofactor is [4Fe-4S] cluster.

The protein localises to the cytoplasm. It carries out the reaction cytidine(32) in tRNA + S-sulfanyl-L-cysteinyl-[cysteine desulfurase] + AH2 + ATP = 2-thiocytidine(32) in tRNA + L-cysteinyl-[cysteine desulfurase] + A + AMP + diphosphate + H(+). It participates in tRNA modification. Its function is as follows. Catalyzes the ATP-dependent 2-thiolation of cytidine in position 32 of tRNA, to form 2-thiocytidine (s(2)C32). The sulfur atoms are provided by the cysteine/cysteine desulfurase (IscS) system. This chain is tRNA-cytidine(32) 2-sulfurtransferase, found in Xanthomonas euvesicatoria pv. vesicatoria (strain 85-10) (Xanthomonas campestris pv. vesicatoria).